A 747-amino-acid chain; its full sequence is Ion-translocating oxidoreductase complex subunit C (747 aa).

2 4Fe-4S ferredoxin-type domains span residues Met-368 to Tyr-397 and Lys-407 to Tyr-436. 8 residues coordinate [4Fe-4S] cluster: Cys-377, Cys-380, Cys-383, Cys-387, Cys-416, Cys-419, Cys-422, and Cys-426. Residues Val-538–Asp-564 form a disordered region.

This sequence belongs to the 4Fe4S bacterial-type ferredoxin family. RnfC subfamily. The complex is composed of six subunits: RnfA, RnfB, RnfC, RnfD, RnfE and RnfG. Requires [4Fe-4S] cluster as cofactor.

It is found in the cell inner membrane. Functionally, part of a membrane-bound complex that couples electron transfer with translocation of ions across the membrane. This is Ion-translocating oxidoreductase complex subunit C from Pectobacterium carotovorum subsp. carotovorum (strain PC1).